Consider the following 442-residue polypeptide: Syndecan-3 (442 aa).

2 disordered regions span residues 1–24 and 57–87; these read MKPGPPHRAGAAHGAGAGAGAAAG and RPVDLEGSGDDDSFPDDELDDLYSGSGSGYF. The Extracellular portion of the chain corresponds to 1–387; that stretch reads MKPGPPHRAG…SILERKEVLV (387 aa). A compositionally biased stretch (gly residues) spans 13–24; it reads HGAGAGAGAAAG. The segment covering 63–77 has biased composition (acidic residues); it reads GSGDDDSFPDDELDD. Residues serine 80, serine 82, serine 84, and serine 91 are each glycosylated (O-linked (Xyl...) (glycosaminoglycan) serine). A glycan (O-linked (GalNAc) serine; by GALNT13) is linked at serine 108. 2 O-linked (GalNAc) threonine; by GALNT13 glycosylation sites follow: threonine 109 and threonine 110. Disordered regions lie at residues 150 to 173, 225 to 326, and 340 to 367; these read EEPSQRATTVSTTMATTAATSTGD, TTPE…ETTQ, and AAKASSPPGTLPKGARPGPGLLDNAIDS. Low complexity-rich tracts occupy residues 156 to 173, 225 to 238, and 275 to 286; these read ATTVSTTMATTAATSTGD, TTPEAPSPPTTAAV, and TLPLGTTAPGPT. O-linked (GalNAc) serine; by GALNT13 glycosylation occurs at serine 160. Residues threonine 161, threonine 162, and threonine 169 are each glycosylated (O-linked (GalNAc) threonine; by GALNT13). Residue serine 170 is glycosylated (O-linked (GalNAc) serine; by GALNT13). Threonine 171 carries O-linked (GalNAc) threonine; by GALNT13 glycosylation. A compositionally biased stretch (polar residues) spans 288-299; the sequence is VAQTPTPETFLT. 2 O-linked (Xyl...) (glycosaminoglycan) serine glycosylation sites follow: serine 314 and serine 367. A helical transmembrane segment spans residues 388-408; the sequence is AVIVGGVVGALFAAFLVTLLI. 4 positions are modified to phosphotyrosine: tyrosine 409, tyrosine 419, tyrosine 431, and tyrosine 441. Over 409-442 the chain is Cytoplasmic; that stretch reads YRMKKKDEGSYTLEEPKQASVTYQKPDKQEEFYA. The disordered stretch occupies residues 419-442; that stretch reads YTLEEPKQASVTYQKPDKQEEFYA. Positions 433–442 are enriched in basic and acidic residues; that stretch reads KPDKQEEFYA.

The protein belongs to the syndecan proteoglycan family. As to quaternary structure, interacts with TIAM1. Interacts with PTN (via heparan sulfate chains); this interaction mediates the neurite outgrowth-promoting signal from PTN to the cytoskeleton of growing neurites; this interaction mediates osteoblast recruitment. Interacts with MDK; this interaction induces SDC3 clustering; this interaction induces neuronal cell adhesion and neurite outgrowth. Post-translationally, O-glycosylated within the Thr/Ser-rich region which could interact with lectin domains on other molecules. Expressed in the nervous system, the adrenal gland, and the spleen.

The protein resides in the cell membrane. In terms of biological role, cell surface proteoglycan that may bear heparan sulfate. May have a role in the organization of cell shape by affecting the actin cytoskeleton, possibly by transferring signals from the cell surface in a sugar-dependent mechanism. The chain is Syndecan-3 (SDC3) from Homo sapiens (Human).